The following is a 187-amino-acid chain: Anterior gradient protein 1 (187 aa).

Positions methionine 1–alanine 20 are cleaved as a signal peptide.

It belongs to the AGR family.

The protein resides in the secreted. Probably involved in cement gland formation. The sequence is that of Anterior gradient protein 1 (ag1) from Xenopus tropicalis (Western clawed frog).